The primary structure comprises 156 residues: ATP synthase subunit b (156 aa).

Residues 7–27 form a helical membrane-spanning segment; sequence LIGQLIAFALFVAFCMKFVWP.

It belongs to the ATPase B chain family. As to quaternary structure, F-type ATPases have 2 components, F(1) - the catalytic core - and F(0) - the membrane proton channel. F(1) has five subunits: alpha(3), beta(3), gamma(1), delta(1), epsilon(1). F(0) has three main subunits: a(1), b(2) and c(10-14). The alpha and beta chains form an alternating ring which encloses part of the gamma chain. F(1) is attached to F(0) by a central stalk formed by the gamma and epsilon chains, while a peripheral stalk is formed by the delta and b chains.

The protein resides in the cell inner membrane. Functionally, f(1)F(0) ATP synthase produces ATP from ADP in the presence of a proton or sodium gradient. F-type ATPases consist of two structural domains, F(1) containing the extramembraneous catalytic core and F(0) containing the membrane proton channel, linked together by a central stalk and a peripheral stalk. During catalysis, ATP synthesis in the catalytic domain of F(1) is coupled via a rotary mechanism of the central stalk subunits to proton translocation. Its function is as follows. Component of the F(0) channel, it forms part of the peripheral stalk, linking F(1) to F(0). This chain is ATP synthase subunit b, found in Actinobacillus pleuropneumoniae serotype 7 (strain AP76).